The following is a 183-amino-acid chain: Hypoxanthine/guanine phosphoribosyltransferase (183 aa).

It belongs to the purine/pyrimidine phosphoribosyltransferase family. Archaeal HPRT subfamily. As to quaternary structure, homodimer.

Its subcellular location is the cytoplasm. It catalyses the reaction IMP + diphosphate = hypoxanthine + 5-phospho-alpha-D-ribose 1-diphosphate. The catalysed reaction is GMP + diphosphate = guanine + 5-phospho-alpha-D-ribose 1-diphosphate. It participates in purine metabolism; IMP biosynthesis via salvage pathway; IMP from hypoxanthine: step 1/1. Its function is as follows. Catalyzes a salvage reaction resulting in the formation of IMP that is energically less costly than de novo synthesis. This is Hypoxanthine/guanine phosphoribosyltransferase from Methanotorris igneus (strain DSM 5666 / JCM 11834 / Kol 5).